Consider the following 357-residue polypeptide: Peptide chain release factor 1 (357 aa).

Gln-234 bears the N5-methylglutamine mark. Residues 282 to 313 (DSKKQEQRSNNRKQQVGSGDRSERIRTYNFPQ) are disordered.

Belongs to the prokaryotic/mitochondrial release factor family. In terms of processing, methylated by PrmC. Methylation increases the termination efficiency of RF1.

It is found in the cytoplasm. Peptide chain release factor 1 directs the termination of translation in response to the peptide chain termination codons UAG and UAA. The polypeptide is Peptide chain release factor 1 (Borreliella afzelii (strain PKo) (Borrelia afzelii)).